We begin with the raw amino-acid sequence, 255 residues long: Taurine import ATP-binding protein TauB (255 aa).

The ABC transporter domain maps to 2-229 (LNVSGLWAEY…RYAEGEPCRA (228 aa)). Position 34 to 41 (34 to 41 (GPSGCGKT)) interacts with ATP.

This sequence belongs to the ABC transporter superfamily. Taurine importer (TC 3.A.1.17.1) family. In terms of assembly, the complex is composed of two ATP-binding proteins (TauB), two transmembrane proteins (TauC) and a solute-binding protein (TauA).

The protein localises to the cell inner membrane. The catalysed reaction is taurine(out) + ATP + H2O = taurine(in) + ADP + phosphate + H(+). Its function is as follows. Part of the ABC transporter complex TauABC involved in taurine import. Responsible for energy coupling to the transport system. In Yersinia pseudotuberculosis serotype I (strain IP32953), this protein is Taurine import ATP-binding protein TauB.